The primary structure comprises 613 residues: Phosphoinositide phospholipase C 6 (613 aa).

The PI-PLC X-box domain occupies 137–281; the sequence is QDMTAPLSHY…LLHRIIISTK (145 aa). Residues His152 and His198 contribute to the active site. A disordered region spans residues 288–349; that stretch reads ESRNPIVKQK…ASEDQKPAYK (62 aa). Residues 349 to 465 enclose the PI-PLC Y-box domain; that stretch reads KRLITIHAGK…GYVKKPNFLM (117 aa). In terms of domain architecture, C2 spans 466-595; it reads KKGFHDEVFD…PGIRSVPLYD (130 aa).

Ca(2+) serves as cofactor. As to expression, expressed in leaves, flowers and siliques, but not in roots.

It localises to the cell membrane. It carries out the reaction a 1,2-diacyl-sn-glycero-3-phospho-(1D-myo-inositol-4,5-bisphosphate) + H2O = 1D-myo-inositol 1,4,5-trisphosphate + a 1,2-diacyl-sn-glycerol + H(+). The production of the second messenger molecules diacylglycerol (DAG) and inositol 1,4,5-trisphosphate (IP3) is mediated by activated phosphatidylinositol-specific phospholipase C enzymes. The polypeptide is Phosphoinositide phospholipase C 6 (PLC6) (Arabidopsis thaliana (Mouse-ear cress)).